We begin with the raw amino-acid sequence, 490 residues long: Probable glycine dehydrogenase (decarboxylating) subunit 2 (490 aa).

At lysine 273 the chain carries N6-(pyridoxal phosphate)lysine.

It belongs to the GcvP family. C-terminal subunit subfamily. As to quaternary structure, the glycine cleavage system is composed of four proteins: P, T, L and H. In this organism, the P 'protein' is a heterodimer of two subunits. The cofactor is pyridoxal 5'-phosphate.

It carries out the reaction N(6)-[(R)-lipoyl]-L-lysyl-[glycine-cleavage complex H protein] + glycine + H(+) = N(6)-[(R)-S(8)-aminomethyldihydrolipoyl]-L-lysyl-[glycine-cleavage complex H protein] + CO2. The glycine cleavage system catalyzes the degradation of glycine. The P protein binds the alpha-amino group of glycine through its pyridoxal phosphate cofactor; CO(2) is released and the remaining methylamine moiety is then transferred to the lipoamide cofactor of the H protein. The protein is Probable glycine dehydrogenase (decarboxylating) subunit 2 of Staphylococcus aureus (strain MSSA476).